Here is a 401-residue protein sequence, read N- to C-terminus: MTDFQFSKVEDAIEAIRQGKIILVTDDEDRENEGDFICAAEFATPENINFMATYGKGLICTPISTEIAKKLNFHPMVAVNQDNHETAFTVSVDHIDTGTGISAFERSITAMKIVDDNAKATDFRCPGHMFPLIAKDGGVLVRNGHTEATVDLARLAGLKHAGLCCEIMADDGTMMTMPDLQKFAVEHNMPFITIQQLQEYRRKHDSLVKQISVVKMPTKYGEFMAHSFVEVISGKEHVALVKGDLTDGEQVLARIHSECLTGDAFGSQRCDCGQQFAAAMTQIEQEGRGVILYLRQEGRGIGLINKLRAYELQDKGMDTVEANVALGFKEDEREYYIGAQMFQQLGVKSIRLLTNNPAKIEGLKEQGLNIVAREPIIVEPNKNDIDYLKVKQIKMGHMFNF.

A DHBP synthase region spans residues 1–203 (MTDFQFSKVE…IQQLQEYRRK (203 aa)). Residues 30 to 31 (RE), D35, 142 to 146 (RNGHT), and E166 each bind D-ribulose 5-phosphate. E31 is a binding site for Mg(2+). A Mg(2+)-binding site is contributed by H145. A GTP cyclohydrolase II region spans residues 204-401 (HDSLVKQISV…QIKMGHMFNF (198 aa)). Position 254-258 (254-258 (RIHSE)) interacts with GTP. Zn(2+) contacts are provided by C259, C270, and C272. GTP contacts are provided by residues Q275, 297-299 (EGR), and T319. D331 (proton acceptor; for GTP cyclohydrolase activity) is an active-site residue. Residue R333 is the Nucleophile; for GTP cyclohydrolase activity of the active site. 2 residues coordinate GTP: T354 and K359.

It in the N-terminal section; belongs to the DHBP synthase family. This sequence in the C-terminal section; belongs to the GTP cyclohydrolase II family. Mg(2+) serves as cofactor. It depends on Mn(2+) as a cofactor. Requires Zn(2+) as cofactor.

The enzyme catalyses D-ribulose 5-phosphate = (2S)-2-hydroxy-3-oxobutyl phosphate + formate + H(+). It catalyses the reaction GTP + 4 H2O = 2,5-diamino-6-hydroxy-4-(5-phosphoribosylamino)-pyrimidine + formate + 2 phosphate + 3 H(+). It participates in cofactor biosynthesis; riboflavin biosynthesis; 2-hydroxy-3-oxobutyl phosphate from D-ribulose 5-phosphate: step 1/1. The protein operates within cofactor biosynthesis; riboflavin biosynthesis; 5-amino-6-(D-ribitylamino)uracil from GTP: step 1/4. Catalyzes the conversion of D-ribulose 5-phosphate to formate and 3,4-dihydroxy-2-butanone 4-phosphate. In terms of biological role, catalyzes the conversion of GTP to 2,5-diamino-6-ribosylamino-4(3H)-pyrimidinone 5'-phosphate (DARP), formate and pyrophosphate. This is Riboflavin biosynthesis protein RibBA from Actinobacillus pleuropneumoniae serotype 3 (strain JL03).